Here is a 375-residue protein sequence, read N- to C-terminus: Beta sliding clamp (375 aa).

It belongs to the beta sliding clamp family. As to quaternary structure, forms a ring-shaped head-to-tail homodimer around DNA which binds and tethers DNA polymerases and other proteins to the DNA. The DNA replisome complex has a single clamp-loading complex (3 tau and 1 each of delta, delta', psi and chi subunits) which binds 3 Pol III cores (1 core on the leading strand and 2 on the lagging strand) each with a beta sliding clamp dimer. Additional proteins in the replisome are other copies of gamma, psi and chi, Ssb, DNA helicase and RNA primase.

It localises to the cytoplasm. Its function is as follows. Confers DNA tethering and processivity to DNA polymerases and other proteins. Acts as a clamp, forming a ring around DNA (a reaction catalyzed by the clamp-loading complex) which diffuses in an ATP-independent manner freely and bidirectionally along dsDNA. Initially characterized for its ability to contact the catalytic subunit of DNA polymerase III (Pol III), a complex, multichain enzyme responsible for most of the replicative synthesis in bacteria; Pol III exhibits 3'-5' exonuclease proofreading activity. The beta chain is required for initiation of replication as well as for processivity of DNA replication. The protein is Beta sliding clamp (dnaN) of Mycoplasma capricolum subsp. capricolum (strain California kid / ATCC 27343 / NCTC 10154).